Consider the following 546-residue polypeptide: Carotenoid 9,10(9',10')-cleavage dioxygenase (546 aa).

Fe cation-binding residues include His226, His274, His340, and His530.

Belongs to the carotenoid oxygenase family. The cofactor is Fe(2+). In vegetative and floral tissues.

Its subcellular location is the cytoplasm. The enzyme catalyses all-trans-zeaxanthin + 2 O2 = 4,9-dimethyldodeca-2,4,6,8,10-pentaenedial + 2 (3R)-hydroxy-beta-ionone. Functionally, cleaves a variety of carotenoids symmetrically at both the 9-10 and 9'-10' double bonds. Catalyzes the formation of 4,9-dimethyldodeca-2,4,6,8,10-pentaene-1,12-dialdehyde and probably hydroxydihydro-beta-ionone from zeaxanthin. In Crocus sativus (Saffron), this protein is Carotenoid 9,10(9',10')-cleavage dioxygenase (CCD).